The chain runs to 557 residues: 2-succinyl-5-enolpyruvyl-6-hydroxy-3-cyclohexene-1-carboxylate synthase (557 aa).

Belongs to the TPP enzyme family. MenD subfamily. Homodimer. Requires Mg(2+) as cofactor. Mn(2+) is required as a cofactor. Thiamine diphosphate serves as cofactor.

It catalyses the reaction isochorismate + 2-oxoglutarate + H(+) = 5-enolpyruvoyl-6-hydroxy-2-succinyl-cyclohex-3-ene-1-carboxylate + CO2. Its pathway is quinol/quinone metabolism; 1,4-dihydroxy-2-naphthoate biosynthesis; 1,4-dihydroxy-2-naphthoate from chorismate: step 2/7. The protein operates within quinol/quinone metabolism; menaquinone biosynthesis. Catalyzes the thiamine diphosphate-dependent decarboxylation of 2-oxoglutarate and the subsequent addition of the resulting succinic semialdehyde-thiamine pyrophosphate anion to isochorismate to yield 2-succinyl-5-enolpyruvyl-6-hydroxy-3-cyclohexene-1-carboxylate (SEPHCHC). This is 2-succinyl-5-enolpyruvyl-6-hydroxy-3-cyclohexene-1-carboxylate synthase from Staphylococcus aureus (strain bovine RF122 / ET3-1).